A 688-amino-acid chain; its full sequence is Thyroid hormone-induced protein B (688 aa).

The signal sequence occupies residues 1–20 (MMLSHWVLLLSLGAVWLAEG). 4 MAM domains span residues 26–169 (GSCT…GYCI), 170–330 (ECDF…SCSG), 341–500 (AGCD…SCKI), and 509–669 (GKCT…PCND). N-linked (GlcNAc...) asparagine glycosylation is found at Asn-32 and Asn-135. N-linked (GlcNAc...) asparagine glycosylation is found at Asn-358 and Asn-668.

Its subcellular location is the membrane. The protein resides in the secreted. It is found in the extracellular space. The polypeptide is Thyroid hormone-induced protein B (Xenopus laevis (African clawed frog)).